The sequence spans 566 residues: Sister chromatid cohesion protein 1 (566 aa).

A Phosphoserine modification is found at Ser-161. A Phosphoserine; by CDC5 modification is found at Ser-175. Lys-210 carries the N6-acetyllysine; by ECO1 modification. The residue at position 263 (Ser-263) is a Phosphoserine; by CDC5. At Ser-307 the chain carries Phosphoserine. Positions 325 to 356 are disordered; sequence SIQIDEETENSESIASSNTYKEERSNNLLTPQ. Thr-354 carries the phosphothreonine modification.

Belongs to the rad21 family. In terms of assembly, interacts directly with IRR1/SCC3 in cohesin complex. Cohesin complexes are composed of the SMC1 and SMC3 heterodimer attached via their hinge domain, MCD1/SCC1 which link them, and IRR1, which interacts with MCD1. The cohesin complex also interacts with SCC2, which is required for its association with chromosomes. Cleaved by ESP1 at the onset of anaphase. Post-translationally, phosphorylated by CDC5/Polo-like kinase at the onset of anaphase. Phosphorylation takes places at proximity to cleavage sites and is required for an efficient cleavage by ESP1. In terms of processing, acetylated by ECO1.

Its subcellular location is the nucleus. It is found in the chromosome. The protein resides in the centromere. Cleavable component of the cohesin complex involved in chromosome cohesion during cell cycle. The cohesin complex is required for the cohesion of sister chromatids after DNA replication. The cohesin complex apparently forms a large proteinaceous ring within which sister chromatids can be trapped. At metaphase-anaphase transition, this protein is cleaved by ESP1 and dissociates from chromatin, allowing sister chromatids to segregate. This is Sister chromatid cohesion protein 1 (MCD1) from Saccharomyces cerevisiae (strain ATCC 204508 / S288c) (Baker's yeast).